Here is a 647-residue protein sequence, read N- to C-terminus: Chaperone protein DnaK (647 aa).

Phosphothreonine; by autocatalysis is present on T200. The span at A611–Q631 shows a compositional bias: low complexity. Positions A611–K647 are disordered. Residues A638–K647 are compositionally biased toward basic and acidic residues.

Belongs to the heat shock protein 70 family.

Acts as a chaperone. The polypeptide is Chaperone protein DnaK (Cupriavidus taiwanensis (strain DSM 17343 / BCRC 17206 / CCUG 44338 / CIP 107171 / LMG 19424 / R1) (Ralstonia taiwanensis (strain LMG 19424))).